A 432-amino-acid chain; its full sequence is Interleukin-11 receptor subunit alpha-2 (432 aa).

Positions 1–23 are cleaved as a signal peptide; sequence MSSSCSGLTRVLVAVATALVSSS. Over 24–372 the chain is Extracellular; sequence SPCPQAWGPP…DPLEQVAVLA (349 aa). One can recognise an Ig-like C2-type domain in the interval 27-110; sequence PQAWGPPGVQ…SGGMVTLKLG (84 aa). Intrachain disulfides connect cysteine 48–cysteine 94, cysteine 120–cysteine 130, and cysteine 170–cysteine 180. Fibronectin type-III domains are found at residues 112 to 219 and 220 to 317; these read PPAR…LRPD and PPQG…TPST. Residue asparagine 127 is glycosylated (N-linked (GlcNAc...) asparagine). Residues 151 to 170 are disordered; sequence KTLPGAESQRESPSTGPWPC. A glycan (N-linked (GlcNAc...) asparagine) is linked at asparagine 194. Residues 304–308 carry the WSXWS motif motif; the sequence is WSAWS. Residues 373–393 traverse the membrane as a helical segment; the sequence is SLGIFSCLGLAVGALALGLWL. Residues 394–432 are Cytoplasmic-facing; sequence RLRRSGKEGPQKPGLLAPMIPVEKLPGIPNLQRTPENFS.

This sequence belongs to the type I cytokine receptor family. Type 3 subfamily. On ligand binding, forms a multimer complex with IL6ST/gp130. Expression restricted to testis, lymph node and thymus. Highest level in testis.

It localises to the membrane. Receptor for interleukin-11. The receptor systems for IL6, LIF, OSM, CNTF, IL11 and CT1 can utilize IL6ST for initiating signal transmission. The IL11/IL11RA/IL6ST complex may be involved in the control of proliferation and/or differentiation of skeletogenic progenitor or other mesenchymal cells. In Mus musculus (Mouse), this protein is Interleukin-11 receptor subunit alpha-2 (Il11ra2).